The sequence spans 380 residues: Cytochrome b (380 aa).

4 helical membrane-spanning segments follow: residues 34–54, 78–99, 114–134, and 179–199; these read FGSL…LLAM, WLIR…YLHI, WNIG…GYVL, and LFAL…VHLT. Positions 84 and 98 each coordinate heme b. Residues His-183 and His-197 each contribute to the heme b site. His-202 contributes to the a ubiquinone binding site. Helical transmembrane passes span 227-247, 289-309, 321-341, and 348-368; these read IKDL…ALFA, LGGV…PLLH, LSQM…WVGS, and FIII…VLFP.

This sequence belongs to the cytochrome b family. As to quaternary structure, the cytochrome bc1 complex contains 11 subunits: 3 respiratory subunits (MT-CYB, CYC1 and UQCRFS1), 2 core proteins (UQCRC1 and UQCRC2) and 6 low-molecular weight proteins (UQCRH/QCR6, UQCRB/QCR7, UQCRQ/QCR8, UQCR10/QCR9, UQCR11/QCR10 and a cleavage product of UQCRFS1). This cytochrome bc1 complex then forms a dimer. Heme b serves as cofactor.

The protein localises to the mitochondrion inner membrane. In terms of biological role, component of the ubiquinol-cytochrome c reductase complex (complex III or cytochrome b-c1 complex) that is part of the mitochondrial respiratory chain. The b-c1 complex mediates electron transfer from ubiquinol to cytochrome c. Contributes to the generation of a proton gradient across the mitochondrial membrane that is then used for ATP synthesis. This chain is Cytochrome b (MT-CYB), found in Aphelocoma coerulescens (Florida scrub-jay).